Reading from the N-terminus, the 123-residue chain is MKQFIFFALLCTSTYAAIHILTEKEDHATLHISFNDLIKIQLRTNPSTGYAWNIEYPTDTFSLSQDTIKAEPHPSGMVGFPSIREIQLKPLKVGTTTIKLGYSRPWEKGKEPLRSLTYSVVIR.

The signal sequence occupies residues 1–16 (MKQFIFFALLCTSTYA). The BC loop signature appears at 45–50 (NPSTGY). Residues 71–81 (EPHPSGMVGFP) carry the DE loop motif. Positions 105-114 (PWEKGKEPLR) match the FG loop motif.

The protein belongs to the protease inhibitor I42 family. Monomer. May form homodimer. Interacts with cysteine protease CP2. Interacts with cysteine protease CP5.

It localises to the cytoplasmic vesicle. The protein resides in the lysosome. It is found in the phagosome. Functionally, cysteine protease inhibitor. Inhibits cysteine proteases CP1, CP2 and to a lesser extent CP5. The chain is Amoebiasin-2 from Entamoeba histolytica (strain ATCC 30459 / HM-1:IMSS / ABRM).